We begin with the raw amino-acid sequence, 432 residues long: Adenylosuccinate synthetase (432 aa).

GTP-binding positions include 12 to 18 and 40 to 42; these read GDEGKGK and GHT. Aspartate 13 (proton acceptor) is an active-site residue. The Mg(2+) site is built by aspartate 13 and glycine 40. IMP-binding positions include 13 to 16, 38 to 41, threonine 129, arginine 143, glutamine 224, threonine 239, and arginine 303; these read DEGK and NAGH. Catalysis depends on histidine 41, which acts as the Proton donor. 299 to 305 provides a ligand contact to substrate; sequence VTTGRRR. GTP-binding positions include arginine 305, 331 to 333, and 413 to 415; these read KLD and GVG.

It belongs to the adenylosuccinate synthetase family. As to quaternary structure, homodimer. Mg(2+) serves as cofactor.

The protein localises to the cytoplasm. It catalyses the reaction IMP + L-aspartate + GTP = N(6)-(1,2-dicarboxyethyl)-AMP + GDP + phosphate + 2 H(+). It functions in the pathway purine metabolism; AMP biosynthesis via de novo pathway; AMP from IMP: step 1/2. Functionally, plays an important role in the de novo pathway of purine nucleotide biosynthesis. Catalyzes the first committed step in the biosynthesis of AMP from IMP. The polypeptide is Adenylosuccinate synthetase (Mycolicibacterium paratuberculosis (strain ATCC BAA-968 / K-10) (Mycobacterium paratuberculosis)).